We begin with the raw amino-acid sequence, 371 residues long: Glycosyltransferase 8 domain-containing protein 1 (371 aa).

Topologically, residues 1-7 are cytoplasmic; it reads MSFRKVN. A helical; Signal-anchor for type II membrane protein transmembrane segment spans residues 8 to 28; that stretch reads IIILVLAVALFLLVLHHNFLS. Topologically, residues 29 to 371 are lumenal; sequence LSSLLRNEVT…RRYTEISNIK (343 aa). N-linked (GlcNAc...) asparagine glycosylation is found at asparagine 249 and asparagine 257.

The protein belongs to the glycosyltransferase 8 family.

It localises to the membrane. This Homo sapiens (Human) protein is Glycosyltransferase 8 domain-containing protein 1 (GLT8D1).